Reading from the N-terminus, the 104-residue chain is Large ribosomal subunit protein uL23 (104 aa).

Belongs to the universal ribosomal protein uL23 family. In terms of assembly, part of the 50S ribosomal subunit. Contacts protein L29, and trigger factor when it is bound to the ribosome.

One of the early assembly proteins it binds 23S rRNA. One of the proteins that surrounds the polypeptide exit tunnel on the outside of the ribosome. Forms the main docking site for trigger factor binding to the ribosome. The polypeptide is Large ribosomal subunit protein uL23 (Paraburkholderia phytofirmans (strain DSM 17436 / LMG 22146 / PsJN) (Burkholderia phytofirmans)).